The following is a 347-amino-acid chain: Ribosomal RNA small subunit methyltransferase C (347 aa).

The protein belongs to the methyltransferase superfamily. RsmC family. As to quaternary structure, monomer.

The protein resides in the cytoplasm. The enzyme catalyses guanosine(1207) in 16S rRNA + S-adenosyl-L-methionine = N(2)-methylguanosine(1207) in 16S rRNA + S-adenosyl-L-homocysteine + H(+). Functionally, specifically methylates the guanine in position 1207 of 16S rRNA in the 30S particle. In Yersinia enterocolitica serotype O:8 / biotype 1B (strain NCTC 13174 / 8081), this protein is Ribosomal RNA small subunit methyltransferase C.